We begin with the raw amino-acid sequence, 374 residues long: Transaldolase (374 aa).

The Schiff-base intermediate with substrate role is filled by K140.

This sequence belongs to the transaldolase family. Type 2 subfamily.

The protein resides in the cytoplasm. It catalyses the reaction D-sedoheptulose 7-phosphate + D-glyceraldehyde 3-phosphate = D-erythrose 4-phosphate + beta-D-fructose 6-phosphate. The protein operates within carbohydrate degradation; pentose phosphate pathway; D-glyceraldehyde 3-phosphate and beta-D-fructose 6-phosphate from D-ribose 5-phosphate and D-xylulose 5-phosphate (non-oxidative stage): step 2/3. In terms of biological role, transaldolase is important for the balance of metabolites in the pentose-phosphate pathway. The sequence is that of Transaldolase from Renibacterium salmoninarum (strain ATCC 33209 / DSM 20767 / JCM 11484 / NBRC 15589 / NCIMB 2235).